We begin with the raw amino-acid sequence, 348 residues long: tRNA N6-adenosine threonylcarbamoyltransferase (348 aa).

Fe cation is bound by residues histidine 111 and histidine 115. Substrate-binding positions include 134–138 (LVSGG), aspartate 167, glycine 180, and asparagine 276. Aspartate 304 is a Fe cation binding site.

This sequence belongs to the KAE1 / TsaD family. It depends on Fe(2+) as a cofactor.

The protein resides in the cytoplasm. It catalyses the reaction L-threonylcarbamoyladenylate + adenosine(37) in tRNA = N(6)-L-threonylcarbamoyladenosine(37) in tRNA + AMP + H(+). In terms of biological role, required for the formation of a threonylcarbamoyl group on adenosine at position 37 (t(6)A37) in tRNAs that read codons beginning with adenine. Is involved in the transfer of the threonylcarbamoyl moiety of threonylcarbamoyl-AMP (TC-AMP) to the N6 group of A37, together with TsaE and TsaB. TsaD likely plays a direct catalytic role in this reaction. In Bordetella petrii (strain ATCC BAA-461 / DSM 12804 / CCUG 43448), this protein is tRNA N6-adenosine threonylcarbamoyltransferase.